A 513-amino-acid polypeptide reads, in one-letter code: Light-independent protochlorophyllide reductase subunit B (513 aa).

D36 contributes to the [4Fe-4S] cluster binding site. Residue D299 is the Proton donor of the active site. Substrate is bound at residue 434-435 (GM).

This sequence belongs to the ChlB/BchB/BchZ family. Protochlorophyllide reductase is composed of three subunits; ChlL, ChlN and ChlB. Forms a heterotetramer of two ChlB and two ChlN subunits. It depends on [4Fe-4S] cluster as a cofactor.

Its subcellular location is the plastid. It localises to the chloroplast. The enzyme catalyses chlorophyllide a + oxidized 2[4Fe-4S]-[ferredoxin] + 2 ADP + 2 phosphate = protochlorophyllide a + reduced 2[4Fe-4S]-[ferredoxin] + 2 ATP + 2 H2O. It functions in the pathway porphyrin-containing compound metabolism; chlorophyll biosynthesis (light-independent). Functionally, component of the dark-operative protochlorophyllide reductase (DPOR) that uses Mg-ATP and reduced ferredoxin to reduce ring D of protochlorophyllide (Pchlide) to form chlorophyllide a (Chlide). This reaction is light-independent. The NB-protein (ChlN-ChlB) is the catalytic component of the complex. The protein is Light-independent protochlorophyllide reductase subunit B of Staurastrum punctulatum (Green alga).